A 102-amino-acid chain; its full sequence is Large ribosomal subunit protein bL21 (102 aa).

The protein belongs to the bacterial ribosomal protein bL21 family. In terms of assembly, part of the 50S ribosomal subunit. Contacts protein L20.

Functionally, this protein binds to 23S rRNA in the presence of protein L20. This is Large ribosomal subunit protein bL21 from Campylobacter jejuni subsp. doylei (strain ATCC BAA-1458 / RM4099 / 269.97).